The sequence spans 509 residues: ATP synthase subunit alpha (509 aa).

169-176 (GDRQTGKT) contacts ATP.

This sequence belongs to the ATPase alpha/beta chains family. In terms of assembly, F-type ATPases have 2 components, CF(1) - the catalytic core - and CF(0) - the membrane proton channel. CF(1) has five subunits: alpha(3), beta(3), gamma(1), delta(1), epsilon(1). CF(0) has three main subunits: a(1), b(2) and c(9-12). The alpha and beta chains form an alternating ring which encloses part of the gamma chain. CF(1) is attached to CF(0) by a central stalk formed by the gamma and epsilon chains, while a peripheral stalk is formed by the delta and b chains.

Its subcellular location is the cell inner membrane. It carries out the reaction ATP + H2O + 4 H(+)(in) = ADP + phosphate + 5 H(+)(out). Its function is as follows. Produces ATP from ADP in the presence of a proton gradient across the membrane. The alpha chain is a regulatory subunit. The chain is ATP synthase subunit alpha from Novosphingobium aromaticivorans (strain ATCC 700278 / DSM 12444 / CCUG 56034 / CIP 105152 / NBRC 16084 / F199).